Here is a 644-residue protein sequence, read N- to C-terminus: 3D-(3,5/4)-trihydroxycyclohexane-1,2-dione hydrolase (644 aa).

A thiamine diphosphate-binding site is contributed by Glu-65. The interval 442–522 (SLPGDLQRMW…INVLLFDNSG (81 aa)) is thiamine pyrophosphate binding. 2 residues coordinate Mg(2+): Asp-493 and Asn-520.

This sequence belongs to the TPP enzyme family. Mg(2+) is required as a cofactor. The cofactor is thiamine diphosphate.

It carries out the reaction 3D-3,5/4-trihydroxycyclohexane-1,2-dione + H2O = 5-deoxy-D-glucuronate + H(+). It functions in the pathway polyol metabolism; myo-inositol degradation into acetyl-CoA; acetyl-CoA from myo-inositol: step 3/7. Its function is as follows. Involved in the cleavage of the C1-C2 bond of 3D-(3,5/4)-trihydroxycyclohexane-1,2-dione (THcHDO) to yield 5-deoxy-glucuronate (5DG). The chain is 3D-(3,5/4)-trihydroxycyclohexane-1,2-dione hydrolase from Bacillus cereus (strain AH820).